A 64-amino-acid polypeptide reads, in one-letter code: Putative neurotoxin-G (64 aa).

The first 19 residues, 1–19 (MFAMVTVTVLLLISSGIFC), serve as a signal peptide directing secretion. 3 cysteine pairs are disulfide-bonded: C25/C45, C32/C54, and C36/C56.

As to expression, expressed by the venom gland.

The protein localises to the secreted. This chain is Putative neurotoxin-G, found in Lychas mucronatus (Chinese swimming scorpion).